The following is a 526-amino-acid chain: Bifunctional purine biosynthesis protein PurH (526 aa).

In terms of domain architecture, MGS-like spans Met-1–Val-149.

The protein belongs to the PurH family.

It catalyses the reaction (6R)-10-formyltetrahydrofolate + 5-amino-1-(5-phospho-beta-D-ribosyl)imidazole-4-carboxamide = 5-formamido-1-(5-phospho-D-ribosyl)imidazole-4-carboxamide + (6S)-5,6,7,8-tetrahydrofolate. The catalysed reaction is IMP + H2O = 5-formamido-1-(5-phospho-D-ribosyl)imidazole-4-carboxamide. It functions in the pathway purine metabolism; IMP biosynthesis via de novo pathway; 5-formamido-1-(5-phospho-D-ribosyl)imidazole-4-carboxamide from 5-amino-1-(5-phospho-D-ribosyl)imidazole-4-carboxamide (10-formyl THF route): step 1/1. It participates in purine metabolism; IMP biosynthesis via de novo pathway; IMP from 5-formamido-1-(5-phospho-D-ribosyl)imidazole-4-carboxamide: step 1/1. The polypeptide is Bifunctional purine biosynthesis protein PurH (Rhodospirillum rubrum (strain ATCC 11170 / ATH 1.1.1 / DSM 467 / LMG 4362 / NCIMB 8255 / S1)).